Reading from the N-terminus, the 485-residue chain is Glutamyl-tRNA(Gln) amidotransferase subunit A (485 aa).

Active-site charge relay system residues include lysine 78 and serine 153. The active-site Acyl-ester intermediate is the serine 177.

It belongs to the amidase family. GatA subfamily. In terms of assembly, heterotrimer of A, B and C subunits.

It catalyses the reaction L-glutamyl-tRNA(Gln) + L-glutamine + ATP + H2O = L-glutaminyl-tRNA(Gln) + L-glutamate + ADP + phosphate + H(+). Its function is as follows. Allows the formation of correctly charged Gln-tRNA(Gln) through the transamidation of misacylated Glu-tRNA(Gln) in organisms which lack glutaminyl-tRNA synthetase. The reaction takes place in the presence of glutamine and ATP through an activated gamma-phospho-Glu-tRNA(Gln). The protein is Glutamyl-tRNA(Gln) amidotransferase subunit A of Trichlorobacter lovleyi (strain ATCC BAA-1151 / DSM 17278 / SZ) (Geobacter lovleyi).